The primary structure comprises 467 residues: DNA polymerase IV (467 aa).

The region spanning V5–G187 is the UmuC domain. D9 and D104 together coordinate Mg(2+). E105 is an active-site residue. Disordered regions lie at residues P364–P386 and T428–D449.

It belongs to the DNA polymerase type-Y family. As to quaternary structure, monomer. Mg(2+) is required as a cofactor.

The protein localises to the cytoplasm. It carries out the reaction DNA(n) + a 2'-deoxyribonucleoside 5'-triphosphate = DNA(n+1) + diphosphate. Functionally, poorly processive, error-prone DNA polymerase involved in untargeted mutagenesis. Copies undamaged DNA at stalled replication forks, which arise in vivo from mismatched or misaligned primer ends. These misaligned primers can be extended by PolIV. Exhibits no 3'-5' exonuclease (proofreading) activity. May be involved in translesional synthesis, in conjunction with the beta clamp from PolIII. The sequence is that of DNA polymerase IV from Corynebacterium glutamicum (strain R).